A 382-amino-acid chain; its full sequence is Cytochrome c biogenesis CcmF N-terminal-like mitochondrial protein 1 (382 aa).

Helical transmembrane passes span 1–21, 30–50, 79–99, and 117–137; these read MSISIYEFFHYSLFLGLFVAF, AFGAALAFWCILLSFLGLLFC, HEGSILLWCWILNFYGFFFCY, and SLFFFFVLNFVKNSILSLLRY.

The protein belongs to the CcmF/CycK/Ccl1/NrfE/CcsA family. In terms of assembly, interacts with CCMFN2 and CCMH.

Its subcellular location is the mitochondrion inner membrane. Forms a complex with CCMFC, CCMFN2 and CCMH that performs the assembly of heme with c-type apocytochromes in mitochondria. The protein is Cytochrome c biogenesis CcmF N-terminal-like mitochondrial protein 1 of Arabidopsis thaliana (Mouse-ear cress).